Reading from the N-terminus, the 369-residue chain is Putative esterase slr0264 (369 aa).

Residues Ser-162, Asp-303, and His-334 each act as charge relay system in the active site.

This sequence belongs to the AB hydrolase superfamily. AB hydrolase 4 family.

The polypeptide is Putative esterase slr0264 (Synechocystis sp. (strain ATCC 27184 / PCC 6803 / Kazusa)).